The following is a 278-amino-acid chain: 4-deoxy-L-threo-5-hexosulose-uronate ketol-isomerase (278 aa).

Zn(2+)-binding residues include His196, His198, Glu203, and His245.

This sequence belongs to the KduI family. As to quaternary structure, homohexamer. It depends on Zn(2+) as a cofactor.

The catalysed reaction is 5-dehydro-4-deoxy-D-glucuronate = 3-deoxy-D-glycero-2,5-hexodiulosonate. The protein operates within glycan metabolism; pectin degradation; 2-dehydro-3-deoxy-D-gluconate from pectin: step 4/5. Functionally, catalyzes the isomerization of 5-dehydro-4-deoxy-D-glucuronate to 3-deoxy-D-glycero-2,5-hexodiulosonate. The sequence is that of 4-deoxy-L-threo-5-hexosulose-uronate ketol-isomerase from Escherichia coli (strain UTI89 / UPEC).